Here is a 222-residue protein sequence, read N- to C-terminus: Uridine diphosphate glucose pyrophosphatase NUDT14 (222 aa).

The region spanning 38 to 206 (KTHDSVTVLL…DIPKTLGVIF (169 aa)) is the Nudix hydrolase domain. Positions 111–129 (PGLSLEEVACKEAWEECGY) match the Nudix box motif.

Belongs to the Nudix hydrolase family. In terms of assembly, homodimer. Requires Mg(2+) as cofactor.

Its subcellular location is the cytoplasm. It catalyses the reaction UDP-sugar + H2O = UMP + alpha-D-aldose 1-phosphate.. Functionally, hydrolyzes UDP-glucose to glucose 1-phosphate and UMP and ADP-ribose to ribose 5-phosphate and AMP. The physiological substrate is probably UDP-glucose. Poor activity on other substrates such as ADP-glucose, CDP-glucose, GDP-glucose and GDP-mannose. The sequence is that of Uridine diphosphate glucose pyrophosphatase NUDT14 (NUDT14) from Homo sapiens (Human).